The primary structure comprises 408 residues: Imidazolonepropionase (408 aa).

The Fe(3+) site is built by His73 and His75. Zn(2+) is bound by residues His73 and His75. 4-imidazolone-5-propanoate-binding residues include Arg82, Tyr145, and His178. Tyr145 lines the N-formimidoyl-L-glutamate pocket. His243 is a binding site for Fe(3+). His243 contributes to the Zn(2+) binding site. Gln246 contributes to the 4-imidazolone-5-propanoate binding site. Asp318 is a Fe(3+) binding site. Residue Asp318 coordinates Zn(2+). Positions 320 and 322 each coordinate N-formimidoyl-L-glutamate. Residue Ser323 coordinates 4-imidazolone-5-propanoate.

Belongs to the metallo-dependent hydrolases superfamily. HutI family. Requires Zn(2+) as cofactor. Fe(3+) is required as a cofactor.

Its subcellular location is the cytoplasm. It catalyses the reaction 4-imidazolone-5-propanoate + H2O = N-formimidoyl-L-glutamate. The protein operates within amino-acid degradation; L-histidine degradation into L-glutamate; N-formimidoyl-L-glutamate from L-histidine: step 3/3. Catalyzes the hydrolytic cleavage of the carbon-nitrogen bond in imidazolone-5-propanoate to yield N-formimidoyl-L-glutamate. It is the third step in the universal histidine degradation pathway. This chain is Imidazolonepropionase, found in Shewanella woodyi (strain ATCC 51908 / MS32).